The following is a 348-amino-acid chain: Benzoate 1,2-dioxygenase electron transfer component (348 aa).

Residues 14 to 109 enclose the 2Fe-2S ferredoxin-type domain; it reads HQVALQFEDG…DAVFQIQASS (96 aa). [2Fe-2S] cluster contacts are provided by Cys51, Cys56, Cys59, and Cys93. Residues 111–348 form a ferredoxin-reductase region; sequence VCKTKIHHFE…NFLFEKFSAN (238 aa). Residues 116 to 217 form the FAD-binding FR-type domain; the sequence is IHHFEGTLAR…TGPFGSFYLR (102 aa).

Belongs to the bacterial ring-hydroxylating dioxygenase ferredoxin reductase family. As to quaternary structure, this dioxygenase system consists of three proteins: the two subunits of the hydroxylase component (BenA and BenB), and an electron transfer component (BenC). The cofactor is FAD. Requires [2Fe-2S] cluster as cofactor.

It carries out the reaction 2 reduced [2Fe-2S]-[ferredoxin] + NAD(+) + H(+) = 2 oxidized [2Fe-2S]-[ferredoxin] + NADH. It functions in the pathway xenobiotic degradation; toluene degradation. Its function is as follows. Electron transfer component of benzoate 1,2-dioxygenase system. The protein is Benzoate 1,2-dioxygenase electron transfer component (benC) of Acinetobacter baylyi (strain ATCC 33305 / BD413 / ADP1).